A 232-amino-acid polypeptide reads, in one-letter code: 5'-methylthioadenosine/S-adenosylhomocysteine nucleosidase (232 aa).

Glutamate 12 (proton acceptor) is an active-site residue. Substrate is bound by residues glycine 78, isoleucine 152, and methionine 173–glutamate 174. Aspartate 197 (proton donor) is an active-site residue.

The protein belongs to the PNP/UDP phosphorylase family. MtnN subfamily. In terms of assembly, homodimer.

It carries out the reaction S-adenosyl-L-homocysteine + H2O = S-(5-deoxy-D-ribos-5-yl)-L-homocysteine + adenine. The enzyme catalyses S-methyl-5'-thioadenosine + H2O = 5-(methylsulfanyl)-D-ribose + adenine. The catalysed reaction is 5'-deoxyadenosine + H2O = 5-deoxy-D-ribose + adenine. It functions in the pathway amino-acid biosynthesis; L-methionine biosynthesis via salvage pathway; S-methyl-5-thio-alpha-D-ribose 1-phosphate from S-methyl-5'-thioadenosine (hydrolase route): step 1/2. Its function is as follows. Catalyzes the irreversible cleavage of the glycosidic bond in both 5'-methylthioadenosine (MTA) and S-adenosylhomocysteine (SAH/AdoHcy) to adenine and the corresponding thioribose, 5'-methylthioribose and S-ribosylhomocysteine, respectively. Also cleaves 5'-deoxyadenosine, a toxic by-product of radical S-adenosylmethionine (SAM) enzymes, into 5-deoxyribose and adenine. Thus, is required for in vivo function of the radical SAM enzymes biotin synthase and lipoic acid synthase, that are inhibited by 5'-deoxyadenosine accumulation. This Salmonella arizonae (strain ATCC BAA-731 / CDC346-86 / RSK2980) protein is 5'-methylthioadenosine/S-adenosylhomocysteine nucleosidase.